The following is a 333-amino-acid chain: Ornithine carbamoyltransferase (333 aa).

Residues 56-59 (STRT), Gln83, Arg107, and 134-137 (HPTQ) contribute to the carbamoyl phosphate site. L-ornithine is bound by residues Asn167, Asp231, and 235-236 (SM). Residues 273 to 274 (CL) and Arg318 each bind carbamoyl phosphate.

The protein belongs to the aspartate/ornithine carbamoyltransferase superfamily. OTCase family.

The protein resides in the cytoplasm. The catalysed reaction is carbamoyl phosphate + L-ornithine = L-citrulline + phosphate + H(+). The protein operates within amino-acid biosynthesis; L-arginine biosynthesis; L-arginine from L-ornithine and carbamoyl phosphate: step 1/3. Its function is as follows. Reversibly catalyzes the transfer of the carbamoyl group from carbamoyl phosphate (CP) to the N(epsilon) atom of ornithine (ORN) to produce L-citrulline. The chain is Ornithine carbamoyltransferase from Staphylococcus aureus (strain MSSA476).